We begin with the raw amino-acid sequence, 152 residues long: 3-dehydroquinate dehydratase (152 aa).

The active-site Proton acceptor is Tyr22. Asn73, His79, and Asp86 together coordinate substrate. His99 (proton donor) is an active-site residue. Substrate contacts are provided by residues 100-101 (LS) and Arg110.

Belongs to the type-II 3-dehydroquinase family. Homododecamer.

The enzyme catalyses 3-dehydroquinate = 3-dehydroshikimate + H2O. It participates in metabolic intermediate biosynthesis; chorismate biosynthesis; chorismate from D-erythrose 4-phosphate and phosphoenolpyruvate: step 3/7. Its function is as follows. Catalyzes a trans-dehydration via an enolate intermediate. The sequence is that of 3-dehydroquinate dehydratase from Gemmatimonas aurantiaca (strain DSM 14586 / JCM 11422 / NBRC 100505 / T-27).